The following is a 171-amino-acid chain: Nicotinamide-nucleotide adenylyltransferase (171 aa).

The protein belongs to the archaeal NMN adenylyltransferase family.

The protein resides in the cytoplasm. The enzyme catalyses beta-nicotinamide D-ribonucleotide + ATP + H(+) = diphosphate + NAD(+). It participates in cofactor biosynthesis; NAD(+) biosynthesis; NAD(+) from nicotinamide D-ribonucleotide: step 1/1. In Methanococcus maripaludis (strain C5 / ATCC BAA-1333), this protein is Nicotinamide-nucleotide adenylyltransferase.